The sequence spans 283 residues: ATP synthase gamma chain (283 aa).

This sequence belongs to the ATPase gamma chain family. F-type ATPases have 2 components, CF(1) - the catalytic core - and CF(0) - the membrane proton channel. CF(1) has five subunits: alpha(3), beta(3), gamma(1), delta(1), epsilon(1). CF(0) has three main subunits: a, b and c.

The protein resides in the cell membrane. Produces ATP from ADP in the presence of a proton gradient across the membrane. The gamma chain is believed to be important in regulating ATPase activity and the flow of protons through the CF(0) complex. The protein is ATP synthase gamma chain of Exiguobacterium sibiricum (strain DSM 17290 / CCUG 55495 / CIP 109462 / JCM 13490 / 255-15).